The chain runs to 463 residues: MHEVTVVGAGLVGCLAALAFADRGHKVALYDARPDLRSEAELKNASLRSINLAVSARGIEALRSVDTKMAERVLADIIPMYGRMIHDLQGGQHAQAYGLWGECINSIDRAQLNRTMLDVIEDNANITFFPEHKLTNISLSRKDKKYQRPTSTFETKEGEERVVESDYIIGADGAFSKTRDRLQRYVRMNYAQQYIDCVYLELKIPKADGPDPFSISPNHLHIWPRHKYMLIALANGDGSFTSTLFAPPALMEQVCESQNTFISFFKEQFPDAYELMGESQILESYENNPRSPLVSLKCSPYNHKGECLLVGDAAHCMVPFYGQGMNAGFEDIRVLMEILDEKKWNVEEAFNTYTERRHKDLVAIVDLAMRNYVEMSHSVVSLPYLIRKKVDGVLGRVFSSAWVPLYSMVSFRADIPYSKALSRSARQDRIIGNIVNWTSFAGLVGMGALFYYKGRHLFGRLFE.

It belongs to the aromatic-ring hydroxylase family. KMO subfamily. FAD serves as cofactor.

It is found in the mitochondrion outer membrane. The catalysed reaction is L-kynurenine + NADPH + O2 + H(+) = 3-hydroxy-L-kynurenine + NADP(+) + H2O. The protein operates within cofactor biosynthesis; NAD(+) biosynthesis; quinolinate from L-kynurenine: step 1/3. Catalyzes the hydroxylation of L-kynurenine (L-Kyn) to form 3-hydroxy-L-kynurenine (L-3OHKyn). Required for synthesis of quinolinic acid. The chain is Kynurenine 3-monooxygenase from Yarrowia lipolytica (strain CLIB 122 / E 150) (Yeast).